A 301-amino-acid polypeptide reads, in one-letter code: Olfactory receptor 10AG1 (301 aa).

Topologically, residues 1–16 (MEFVLLGFSDIPNLHW) are extracellular. The chain crosses the membrane as a helical span at residues 17 to 37 (MLFSIFLLMYLMILMCNGIII). Residues 38-45 (LLIKIHPA) are Cytoplasmic-facing. A helical transmembrane segment spans residues 46–66 (LQTPMYFFLSNFSLLEICYVT). Over 67–90 (IIIPRMLMDIWTQKGNISLFACAT) the chain is Extracellular. Asn82 carries N-linked (GlcNAc...) asparagine glycosylation. Cys88 and Cys180 are disulfide-bonded. The helical transmembrane segment at 91–111 (QMCFFLMLGGTECLLLTVMAY) threads the bilayer. Residues 112–130 (DRYVAICKPLQYPLVMNHK) lie on the Cytoplasmic side of the membrane. Residues 131–151 (VCIQLIIASWTITIPVVIGET) form a helical membrane-spanning segment. The Extracellular segment spans residues 152–188 (CQIFLLPFCGTNTINHFFCDIPPILKLACGNIFVNEI). Residues 189–208 (TVHVVAVVFITVPFLLIVVS) form a helical membrane-spanning segment. At 209 to 228 (YGKIISNILKLSSARGKAKA) the chain is on the cytoplasmic side. Residues 229-249 (FSTCSSHLIVVILFFGAGTIT) traverse the membrane as a helical segment. At 250–262 (YLQPKPHQFQRMG) the chain is on the extracellular side. Residues 263–283 (KLISLFYTILIPTLNPIIYTL) traverse the membrane as a helical segment. At 284 to 301 (RNKDIMVALRKLLAKLLT) the chain is on the cytoplasmic side.

This sequence belongs to the G-protein coupled receptor 1 family.

It localises to the cell membrane. Its function is as follows. Odorant receptor. The protein is Olfactory receptor 10AG1 (OR10AG1) of Homo sapiens (Human).